Here is a 642-residue protein sequence, read N- to C-terminus: Voltage-gated potassium channel KCNC2 (642 aa).

At 1–233 (MGKIESNERV…EDPYSSRAAR (233 aa)) the chain is on the cytoplasmic side. Residues 45-98 (DCLTAAGDKLQPLPPPLSPPPRPPPLSPVPSGCFEGGAGNCSSHGGNGGNGGSD) form a disordered region. A compositionally biased stretch (pro residues) spans 56 to 72 (PLPPPLSPPPRPPPLSP). Positions 78 to 98 (FEGGAGNCSSHGGNGGNGGSD) are enriched in gly residues. Zn(2+)-binding residues include H128, C134, C155, and C156. Residues 234-254 (FIAFASLFFILVSITTFCLET) form a helical membrane-spanning segment. 2 N-linked (GlcNAc...) asparagine glycosylation sites follow: N263 and N270. Residues 287-307 (TYVEGVCVVWFTFEFLVRIVF) form a helical membrane-spanning segment. Topologically, residues 308–317 (SPNKLEFIKN) are cytoplasmic. A helical transmembrane segment spans residues 318-338 (LLNIIDFVAILPFYLEVGLSG). The helical; Voltage-sensor transmembrane segment at 350–372 (FLRVVRFVRILRIFKLTRHFVGL) threads the bilayer. Topologically, residues 373 to 385 (RVLGHTLRASTNE) are cytoplasmic. A helical membrane pass occupies residues 386-406 (FLLLIIFLALGVLIFATMIYY). Residues T441, L442, G443, and Y444 each contribute to the K(+) site. The short motif at 441-446 (TLGYGD) is the Selectivity filter element. Residues 457-477 (VGALCALAGVLTIAMPVPVIV) traverse the membrane as a helical segment. Residues 478–642 (NNFGMYYSLA…RSRSPIPSIL (165 aa)) are Cytoplasmic-facing. Positions 542–576 (SVLSGDDSTGSEPPLSPPERLPIRRSSTRDKNRRG) are disordered. A Phosphoserine modification is found at S604.

Belongs to the potassium channel family. C (Shaw) (TC 1.A.1.2) subfamily. Kv3.2/KCNC2 sub-subfamily. Homotetramer and heterotetramer with other channel-forming alpha subunits, such as KCNC1. Interacts with KCNC1. Homotetramer or heterotetramer channel activity is regulated by association with modulating ancillary subunits such as KCNE1, KCNE2 and KCNE3, creating a functionally diverse range of channel complexes. Interacts with KCNE1, KCNE2 and KCNE3. In terms of processing, phosphorylated by PKA in cortical synaptosomes. cAMP-dependent phosphorylation inhibits channel activity. Histamine H2 receptor- and PKA-induced phosphorylation extends action potential spike duration, reduces action potential spike amplitude, sustains maximum firing frequency in hippocampal interneurons; also reduces the incidence of high-frequency oscillations in hippocampal CA3 pyramidal cell layers. Weakly expressed in the brain at postnatal age day 7 (P7) and increased at P60. Not detectable in newborn hippocampus. Expressed weakly at P7 in the early developing hippocampus, increasing progressively and reaching a plateau of expression at P14 that is maintained throughout P51. Expressed in paravalbumin- and somatostain-containing inhibitory interneurons of the hippocampus; in the CA1/CA3 stratum oriens-alveus and stratum pyramidale and in cells within the hilus and subgranular layer of the dentate gyrus (DG). Strongly expressed in parvalbumin (PV)-containing fast-spiking GABAergic inhibitor interneurons in deep cortical layers V and VI. Also expressed in non-fast-spiking calbindin (CB)- and/or somatostatin (SOM)-containing interneurons in deep cortical layers V and VI. Expressed in starburst amacrine cells of the retina in the inner nuclear layer (INL) and ganglion cell layer (GCL). Expressed in the suprachiasmatic nucleus (SCN) (at protein level). Expressed in the early developing brain, increasing progressively until P14.

The protein resides in the cell membrane. It is found in the membrane. The protein localises to the perikaryon. It localises to the cell projection. Its subcellular location is the axon. The protein resides in the dendrite. It is found in the postsynaptic cell membrane. The protein localises to the presynaptic cell membrane. It localises to the synapse. Its subcellular location is the synaptosome. The protein resides in the apical cell membrane. It is found in the basolateral cell membrane. The catalysed reaction is K(+)(in) = K(+)(out). Its activity is regulated as follows. Inhibited by millimolar levels of tetraethylammonium (TEA). Contrary to other channels, inhibited only by millimolar levels of 4-aminopyridine (4-AP). Inhibited by Stichodactyla helianthus peptide ShK. Its function is as follows. Voltage-gated potassium channel that mediates transmembrane potassium transport in excitable membranes, primarily in the brain. Contributes to the regulation of the fast action potential repolarization and in sustained high-frequency firing in neurons of the central nervous system. Homotetramer channels mediate delayed-rectifier voltage-dependent potassium currents that activate rapidly at high-threshold voltages and inactivate slowly. Forms tetrameric channels through which potassium ions pass in accordance with their electrochemical gradient. The channel alternates between opened and closed conformations in response to the voltage difference across the membrane. Can form functional homotetrameric and heterotetrameric channels that contain variable proportions of KCNC1, and possibly other family members as well; channel properties depend on the type of alpha subunits that are part of the channel. Channel properties may be modulated by either the association with ancillary subunits, such as KCNE1, KCNE2 and KCNE3 or indirectly by nitric oxide (NO) through a cGMP- and PKG-mediated signaling cascade, slowing channel activation and deactivation of delayed rectifier potassium channels. Contributes to fire sustained trains of very brief action potentials at high frequency in thalamocortical and suprachiasmatic nucleus (SCN) neurons, in hippocampal and neocortical interneurons and in retinal ganglion cells. Sustained maximal action potential firing frequency in inhibitory hippocampal interneurons is negatively modulated by histamine H2 receptor activation in a cAMP- and protein kinase (PKA) phosphorylation-dependent manner. Plays a role in maintaining the fidelity of synaptic transmission in neocortical GABAergic interneurons by generating action potential (AP) repolarization at nerve terminals, thus reducing spike-evoked calcium influx and GABA neurotransmitter release. Required for long-range synchronization of gamma oscillations over distance in the neocortex. Contributes to the modulation of the circadian rhythm of spontaneous action potential firing in suprachiasmatic nucleus (SCN) neurons in a light-dependent manner. The polypeptide is Voltage-gated potassium channel KCNC2 (Mus musculus (Mouse)).